Here is a 230-residue protein sequence, read N- to C-terminus: ATP synthase subunit a (230 aa).

The next 6 membrane-spanning stretches (helical) occupy residues 26-46 (ANAV…SLIA), 83-103 (FFPL…VGLI), 112-132 (NVNT…VVGI), 143-163 (FMGP…IGHL), 182-202 (LVLM…MMLM), and 203-223 (GVLV…IYIQ).

The protein belongs to the ATPase A chain family. F-type ATPases have 2 components, CF(1) - the catalytic core - and CF(0) - the membrane proton channel. CF(1) has five subunits: alpha(3), beta(3), gamma(1), delta(1), epsilon(1). CF(0) has three main subunits: a(1), b(2) and c(9-12). The alpha and beta chains form an alternating ring which encloses part of the gamma chain. CF(1) is attached to CF(0) by a central stalk formed by the gamma and epsilon chains, while a peripheral stalk is formed by the delta and b chains.

The protein resides in the cell inner membrane. Key component of the proton channel; it plays a direct role in the translocation of protons across the membrane. The polypeptide is ATP synthase subunit a (Trichlorobacter lovleyi (strain ATCC BAA-1151 / DSM 17278 / SZ) (Geobacter lovleyi)).